The primary structure comprises 1017 residues: A-type ATP synthase subunit A (1017 aa).

The 134-residue stretch at 396 to 529 (FLGYLIADGT…FSYLLAKLGI (134 aa)) folds into the DOD-type homing endonuclease domain.

The protein belongs to the ATPase alpha/beta chains family. In terms of assembly, has multiple subunits with at least A(3), B(3), C, D, E, F, H, I and proteolipid K(x). This protein undergoes a protein self splicing that involves a post-translational excision of the VDE intervening region (intein) followed by peptide ligation.

The protein resides in the cell membrane. The catalysed reaction is ATP + H2O + 4 H(+)(in) = ADP + phosphate + 5 H(+)(out). Functionally, component of the A-type ATP synthase that produces ATP from ADP in the presence of a proton gradient across the membrane. The A chain is the catalytic subunit. In Pyrococcus abyssi (strain GE5 / Orsay), this protein is A-type ATP synthase subunit A.